The primary structure comprises 497 residues: Serine/threonine-protein kinase cst-1 (497 aa).

The segment at 1 to 27 is disordered; the sequence is MPPSTDSSRRNSEEGSSDGFKLDSSAL. Positions 35-286 constitute a Protein kinase domain; sequence FDIVGKLGEG…ALRLCEHTFI (252 aa). ATP-binding positions include 41-49 and Lys-64; that span reads LGEGSYGSV. Catalysis depends on Asp-154, which acts as the Proton acceptor. Positions 367 to 416 are disordered; it reads KSAYIPGSSKNGNSPRVQPPGHTASASDPSKNQPFAQDGTGPNFQLGTSE. A compositionally biased stretch (polar residues) spans 390 to 416; that stretch reads ASASDPSKNQPFAQDGTGPNFQLGTSE. The region spanning 446 to 493 is the SARAH domain; it reads FEFLRNITLDELIRRKESLDSEMEEEIRELQRRYKTKRQPILDVIEIK. The stretch at 450–486 forms a coiled coil; that stretch reads RNITLDELIRRKESLDSEMEEEIRELQRRYKTKRQPI.

It belongs to the protein kinase superfamily. STE Ser/Thr protein kinase family. STE20 subfamily. In terms of assembly, interacts with rsf-1 (via SARAH domain); the interaction is required for the phosphorylation of cst-1. The cofactor is Mg(2+). Proteolytically cleaved by caspase-3 during apoptosis which results in kinase activation. In terms of processing, phosphorylated. Widely expressed in epidermal cells.

The enzyme catalyses L-seryl-[protein] + ATP = O-phospho-L-seryl-[protein] + ADP + H(+). It catalyses the reaction L-threonyl-[protein] + ATP = O-phospho-L-threonyl-[protein] + ADP + H(+). Functionally, serine/threonine-protein kinase which extends lifespan and delays tissue aging, probably by activating daf-16. This Caenorhabditis elegans protein is Serine/threonine-protein kinase cst-1.